Consider the following 379-residue polypeptide: Stimulator of interferon genes protein (379 aa).

At 1–23 (MPQDPSTRSSPARLLIPEPRAGR) the chain is on the cytoplasmic side. Residues 24-40 (ARHAACVLLAVCFVVLF) traverse the membrane as a helical segment. At 41 to 50 (LSGEPLAPII) the chain is on the lumenal side. Residues 51–75 (RSVCTQLAALQLGVLLKGCCCLAEE) form a helical membrane-spanning segment. Over 76–97 (IFHLHSRHHGSLWQVLCSCFPP) the chain is Cytoplasmic. Residues 98–111 (RWYLALLLVGGSAY) form a helical membrane-spanning segment. Residues 112-121 (LDPPEDNGHS) lie on the Lumenal side of the membrane. A helical transmembrane segment spans residues 122–139 (PRLALTLSCLCQLLVLAL). The Cytoplasmic segment spans residues 140–379 (GLQKLSAVEV…LPQPLRSDCP (240 aa)). Residues 158–345 (KNVAHGLAWS…WHLQQQQREE (188 aa)) form a cyclic dinucleotide-binding domain (CBD) region. Residues Ser167, Tyr172, 243–246 (RVYK), and Ser268 each bind 3',3'-c-di-GMP. 2',3'-cGAMP is bound by residues 167 to 172 (SYYIGY), 243 to 246 (RVYK), and Ser268. Positions 363–366 (LQVS) match the pLxIS motif motif. A Phosphoserine; by TBK1 modification is found at Ser366.

Belongs to the STING family. Homodimer; forms a homodimer in absence of cyclic nucleotide (c-di-GMP or cGAMP). Homotetramer; in presence of cyclic nucleotide (c-di-GMP or cGAMP), forms tetramers and higher-order oligomers through side-by-side packing. Interacts (when phosphorylated) with IRF3; following activation and phosphorylation on the pLxIS motif by TBK1, recruits IRF3. Phosphorylation by TBK1 leads to activation and production of IFN-beta. Following cyclic nucleotide (c-di-GMP or cGAMP)-binding, activation and translocation from the endoplasmic reticulum, STING1 is phosphorylated by TBK1 at Ser-366 in the pLxIS motif. The phosphorylated pLxIS motif constitutes an IRF3-binding motif, leading to recruitment of the transcription factor IRF3 to induce type-I interferons and other cytokines.

It localises to the endoplasmic reticulum membrane. Its subcellular location is the cytoplasm. The protein resides in the perinuclear region. It is found in the endoplasmic reticulum-Golgi intermediate compartment membrane. The protein localises to the golgi apparatus membrane. It localises to the cytoplasmic vesicle. Its subcellular location is the autophagosome membrane. The enzyme catalyses H(+)(in) = H(+)(out). Facilitator of innate immune signaling that acts as a sensor of cytosolic DNA from bacteria and viruses and promotes the production of type I interferon (IFN-alpha and IFN-beta). Innate immune response is triggered in response to non-CpG double-stranded DNA from viruses and bacteria delivered to the cytoplasm. Acts by binding cyclic dinucleotides: recognizes and binds cyclic di-GMP (c-di-GMP), a second messenger produced by bacteria, and cyclic GMP-AMP (cGAMP), a messenger produced by CGAS in response to DNA virus in the cytosol. Upon binding of c-di-GMP or cGAMP, STING1 oligomerizes and is able to activate both NF-kappa-B and IRF3 transcription pathways to induce expression of type I interferon and exert a potent anti-viral state. Exhibits 2',3' phosphodiester linkage-specific ligand recognition: can bind both 2'-3' linked cGAMP and 3'-3' linked cGAMP but is preferentially activated by 2'-3' linked cGAMP. In addition to promote the production of type I interferons, plays a direct role in autophagy. Following cGAMP-binding, STING1 buds from the endoplasmic reticulum into COPII vesicles, which then form the endoplasmic reticulum-Golgi intermediate compartment (ERGIC). The ERGIC serves as the membrane source for LC3 lipidation, leading to formation of autophagosomes that target cytosolic DNA or DNA viruses for degradation by the lysosome. Promotes autophagy by acting as a proton channel that directs proton efflux from the Golgi to facilitate LC3 lipidation. The autophagy- and interferon-inducing activities can be uncoupled and autophagy induction is independent of TBK1 phosphorylation. The protein is Stimulator of interferon genes protein of Gallus gallus (Chicken).